Consider the following 133-residue polypeptide: Small ribosomal subunit protein uS11 (133 aa).

The protein belongs to the universal ribosomal protein uS11 family. Part of the 30S ribosomal subunit. Interacts with proteins S7 and S18. Binds to IF-3.

In terms of biological role, located on the platform of the 30S subunit, it bridges several disparate RNA helices of the 16S rRNA. Forms part of the Shine-Dalgarno cleft in the 70S ribosome. This is Small ribosomal subunit protein uS11 from Bordetella petrii (strain ATCC BAA-461 / DSM 12804 / CCUG 43448).